Consider the following 170-residue polypeptide: Lipoprotein signal peptidase (170 aa).

A run of 3 helical transmembrane segments spans residues 5–25, 70–90, and 98–118; these read VYHQ…LDQG, WFFT…ICRV, and AFAL…RIIH. Catalysis depends on residues D123 and D141. Residues 137–157 traverse the membrane as a helical segment; the sequence is FNLADAAISLGAMVLIADLFI.

Belongs to the peptidase A8 family.

It localises to the cell inner membrane. It catalyses the reaction Release of signal peptides from bacterial membrane prolipoproteins. Hydrolyzes -Xaa-Yaa-Zaa-|-(S,diacylglyceryl)Cys-, in which Xaa is hydrophobic (preferably Leu), and Yaa (Ala or Ser) and Zaa (Gly or Ala) have small, neutral side chains.. It functions in the pathway protein modification; lipoprotein biosynthesis (signal peptide cleavage). In terms of biological role, this protein specifically catalyzes the removal of signal peptides from prolipoproteins. The polypeptide is Lipoprotein signal peptidase (Cellvibrio japonicus (strain Ueda107) (Pseudomonas fluorescens subsp. cellulosa)).